We begin with the raw amino-acid sequence, 669 residues long: DNA ligase (669 aa).

NAD(+)-binding positions include 32 to 36, 81 to 82, and glutamate 111; these read DAEYD and SL. The N6-AMP-lysine intermediate role is filled by lysine 113. Arginine 134, glutamate 171, lysine 290, and lysine 314 together coordinate NAD(+). Residues cysteine 408, cysteine 411, cysteine 426, and cysteine 432 each contribute to the Zn(2+) site. Positions 591–669 constitute a BRCT domain; it reads EEALSLKGQT…EAELLAILGS (79 aa).

It belongs to the NAD-dependent DNA ligase family. LigA subfamily. Mg(2+) serves as cofactor. The cofactor is Mn(2+).

The enzyme catalyses NAD(+) + (deoxyribonucleotide)n-3'-hydroxyl + 5'-phospho-(deoxyribonucleotide)m = (deoxyribonucleotide)n+m + AMP + beta-nicotinamide D-nucleotide.. Its function is as follows. DNA ligase that catalyzes the formation of phosphodiester linkages between 5'-phosphoryl and 3'-hydroxyl groups in double-stranded DNA using NAD as a coenzyme and as the energy source for the reaction. It is essential for DNA replication and repair of damaged DNA. The polypeptide is DNA ligase (Shewanella loihica (strain ATCC BAA-1088 / PV-4)).